We begin with the raw amino-acid sequence, 874 residues long: Putative disease resistance protein At5g05400 (874 aa).

Residues 22 to 74 (LSRNQNRFRNLVDHVAALKKTVRQLEARRDDLLKRIKVQEDRGLNLLDEVQQW) are a coiled coil. The NB-ARC domain maps to 139–434 (AQKGPIPKVE…GQGIILGSKG (296 aa)). 182–189 (GMGGVGKT) is an ATP binding site. 7 LRR repeats span residues 483–505 (QKNV…EDQK), 506–527 (AVRR…LHCP), 528–548 (KLET…EFLS), 552–574 (ILMV…SPLY), 575–597 (SLRF…YALR), 598–620 (NLLY…HDLP), and 621–642 (NLEV…VRQI).

Belongs to the disease resistance NB-LRR family.

In terms of biological role, potential disease resistance protein. This chain is Putative disease resistance protein At5g05400, found in Arabidopsis thaliana (Mouse-ear cress).